Consider the following 104-residue polypeptide: NADH-quinone oxidoreductase subunit K (104 aa).

3 helical membrane-spanning segments follow: residues 4 to 24 (VPAS…LFGA), 31 to 51 (VIVL…LVAF), and 67 to 87 (LFTM…LIAL).

This sequence belongs to the complex I subunit 4L family. In terms of assembly, NDH-1 is composed of 14 different subunits. Subunits NuoA, H, J, K, L, M, N constitute the membrane sector of the complex.

It is found in the cell membrane. The enzyme catalyses a quinone + NADH + 5 H(+)(in) = a quinol + NAD(+) + 4 H(+)(out). Functionally, NDH-1 shuttles electrons from NADH, via FMN and iron-sulfur (Fe-S) centers, to quinones in the respiratory chain. The immediate electron acceptor for the enzyme in this species is believed to be a menaquinone. Couples the redox reaction to proton translocation (for every two electrons transferred, four hydrogen ions are translocated across the cytoplasmic membrane), and thus conserves the redox energy in a proton gradient. The polypeptide is NADH-quinone oxidoreductase subunit K (Bacillus cereus (strain G9842)).